The chain runs to 168 residues: Small ribosomal subunit protein bS16 (168 aa).

Residues 110 to 168 form a disordered region; that stretch reads LSEANNGPTAEAITEKKKKAREEKEAKEAAEKAAAEKAAAAEAEASEEAPAEEAASEEA. Over residues 129-144 the composition is skewed to basic and acidic residues; it reads AREEKEAKEAAEKAAA. A compositionally biased stretch (acidic residues) spans 153-168; that stretch reads EASEEAPAEEAASEEA.

It belongs to the bacterial ribosomal protein bS16 family.

The protein is Small ribosomal subunit protein bS16 of Corynebacterium efficiens (strain DSM 44549 / YS-314 / AJ 12310 / JCM 11189 / NBRC 100395).